A 258-amino-acid chain; its full sequence is Pimeloyl-[acyl-carrier protein] methyl ester esterase (258 aa).

The region spanning 16 to 244 (LVLVHGWGMN…QSSHAPFMTE (229 aa)) is the AB hydrolase-1 domain. Substrate-binding positions include tryptophan 22, 82-83 (SL), and 146-150 (FMALQ). Serine 82 (nucleophile) is an active-site residue. Active-site residues include aspartate 210 and histidine 238. Position 238 (histidine 238) interacts with substrate.

It belongs to the AB hydrolase superfamily. Carboxylesterase BioH family. In terms of assembly, monomer.

The protein localises to the cytoplasm. The catalysed reaction is 6-carboxyhexanoyl-[ACP] methyl ester + H2O = 6-carboxyhexanoyl-[ACP] + methanol + H(+). It participates in cofactor biosynthesis; biotin biosynthesis. Its function is as follows. The physiological role of BioH is to remove the methyl group introduced by BioC when the pimeloyl moiety is complete. It allows to synthesize pimeloyl-ACP via the fatty acid synthetic pathway through the hydrolysis of the ester bonds of pimeloyl-ACP esters. The polypeptide is Pimeloyl-[acyl-carrier protein] methyl ester esterase (Vibrio atlanticus (strain LGP32) (Vibrio splendidus (strain Mel32))).